Here is a 546-residue protein sequence, read N- to C-terminus: Chaperonin GroEL (546 aa).

ATP contacts are provided by residues 30–33 (TLGP), lysine 51, 87–91 (DGTTT), glycine 415, and aspartate 496. Positions 526 to 546 (PEDKPAPAMPGGMGGMGGMDF) are disordered. A compositionally biased stretch (gly residues) spans 536–546 (GGMGGMGGMDF).

Belongs to the chaperonin (HSP60) family. Forms a cylinder of 14 subunits composed of two heptameric rings stacked back-to-back. Interacts with the co-chaperonin GroES.

The protein resides in the cytoplasm. The catalysed reaction is ATP + H2O + a folded polypeptide = ADP + phosphate + an unfolded polypeptide.. Its function is as follows. Together with its co-chaperonin GroES, plays an essential role in assisting protein folding. The GroEL-GroES system forms a nano-cage that allows encapsulation of the non-native substrate proteins and provides a physical environment optimized to promote and accelerate protein folding. This is Chaperonin GroEL from Zymomonas mobilis subsp. mobilis (strain ATCC 31821 / ZM4 / CP4).